The sequence spans 41 residues: Large ribosomal subunit protein bL36 (41 aa).

This sequence belongs to the bacterial ribosomal protein bL36 family.

This is Large ribosomal subunit protein bL36 from Rickettsia africae (strain ESF-5).